Here is a 292-residue protein sequence, read N- to C-terminus: Protease HtpX homolog (292 aa).

The next 2 membrane-spanning stretches (helical) occupy residues 4 to 24 (IFLF…TLRL) and 42 to 62 (ALLV…LAMS). His147 provides a ligand contact to Zn(2+). Residue Glu148 is part of the active site. Position 151 (His151) interacts with Zn(2+). The next 2 membrane-spanning stretches (helical) occupy residues 158–178 (VTLA…SRII) and 198–218 (FVTS…IVMW). Residue Glu224 participates in Zn(2+) binding.

It belongs to the peptidase M48B family. Zn(2+) is required as a cofactor.

It localises to the cell inner membrane. In Nitrosomonas eutropha (strain DSM 101675 / C91 / Nm57), this protein is Protease HtpX homolog.